Here is a 244-residue protein sequence, read N- to C-terminus: MASLLGAICGWGARPEEQYEMIRAAVPPSEAEPRLQEALAVVNALLPAPITLDDALGSLDDTRRLVKARALARTYHACMVNLERLARHHPGFEAPTIDGAVAAHQDKMRRLADTCMATILQMYMSVGAADKSADVLVSQAIRSMAESDVVMEDVAIAERALGLSAFGVAGGTRSGGIGVTEAPSLGHPHTPPPEVTLAPAARNGDALPDPKPESCPRVSVPRPTASPTAPRPGPSRAAPCVLGQ.

Cys9 is lipidated: S-palmitoyl cysteine; by host. The segment at 178–244 (GVTEAPSLGH…SRAAPCVLGQ (67 aa)) is disordered. Positions 221–244 (PRPTASPTAPRPGPSRAAPCVLGQ) are enriched in low complexity.

It belongs to the herpesviridae UL51 family. In terms of assembly, oligomerizes. Interacts with UL7; this interaction mediates UL7 incorporation to virions. Interacts with UL14. Phosphorylated. Post-translationally, palmitoylation is necessary for Golgi localization.

The protein localises to the virion tegument. Its subcellular location is the host cytoplasm. It localises to the host Golgi apparatus. Functionally, plays several roles during the time course of infection, including egress of virus particles from the perinuclear space and secondary envelopment of cytoplasmic capsids that bud into specific trans-Golgi network (TGN)-derived membranes. Plays also an essential role in the maintenance of host cytoplasmic viral assembly center (cVAC) morphology in primary host neuronal cells. The sequence is that of Tegument protein UL51 from Homo sapiens (Human).